The primary structure comprises 612 residues: Probable methyltransferase PMT9 (612 aa).

At 1 to 14 the chain is on the cytoplasmic side; the sequence is MKHFRTERVRATPK. Residues 15-35 form a helical; Signal-anchor for type II membrane protein membrane-spanning segment; the sequence is LFTYVLVGFIALLGLTCLYYG. Topologically, residues 36-612 are lumenal; that stretch reads SSFAPGSRKS…LWSLPAISVS (577 aa). Asn107, Asn383, and Asn562 each carry an N-linked (GlcNAc...) asparagine glycan.

Belongs to the methyltransferase superfamily.

The protein resides in the golgi apparatus membrane. In Arabidopsis thaliana (Mouse-ear cress), this protein is Probable methyltransferase PMT9.